The chain runs to 385 residues: Actin-2 (385 aa).

It belongs to the actin family. ARP1 subfamily.

It localises to the cytoplasm. It is found in the cytoskeleton. The chain is Actin-2 from Pneumocystis carinii.